Reading from the N-terminus, the 434-residue chain is Pectate lyase (434 aa).

A signal peptide spans 1 to 22 (MKAAQFFLYSLLFFASAALSSA). Asparagine 68 and asparagine 97 each carry an N-linked (GlcNAc...) asparagine glycan. Positions 232, 256, and 260 each coordinate Ca(2+). The active site involves arginine 312.

The protein belongs to the polysaccharide lyase 1 family. It depends on Ca(2+) as a cofactor.

It carries out the reaction Eliminative cleavage of (1-&gt;4)-alpha-D-galacturonan to give oligosaccharides with 4-deoxy-alpha-D-galact-4-enuronosyl groups at their non-reducing ends.. The protein operates within glycan metabolism; pectin degradation; 2-dehydro-3-deoxy-D-gluconate from pectin: step 2/5. The polypeptide is Pectate lyase (Lilium longiflorum (Trumpet lily)).